Reading from the N-terminus, the 216-residue chain is Inner membrane assembly complex subunit 22 (216 aa).

A mitochondrion-targeting transit peptide spans Met-1–Thr-26. Residues Val-27 to Thr-43 lie on the Mitochondrial matrix side of the membrane. The helical transmembrane segment at Met-44–Ala-63 threads the bilayer. A coiled-coil region spans residues Glu-64–Asn-93. Residues Glu-64–Leu-216 are Mitochondrial intermembrane-facing.

Component of the inner membrane assembly (INA) complex, composed of INA17 and INA22. Interacts with a subset of F(1)F(0)-ATP synthase subunits of the F(1)-domain and the peripheral stalk.

The protein localises to the mitochondrion inner membrane. Functionally, component of the INA complex (INAC) that promotes the biogenesis of mitochondrial F(1)F(0)-ATP synthase. INAC facilitates the assembly of the peripheral stalk and promotes the assembly of the catalytic F(1)-domain with the membrane-embedded F(0)-domain. This is Inner membrane assembly complex subunit 22 from Saccharomyces cerevisiae (strain ATCC 204508 / S288c) (Baker's yeast).